We begin with the raw amino-acid sequence, 630 residues long: Threonine--tRNA ligase (630 aa).

An editing domain region spans residues 1–137 (MKVLLIHSDY…PLSELSRKIT (137 aa)). The tract at residues 207–506 (PHVKFITEKE…ADAGAPPMLP (300 aa)) is catalytic. 3 residues coordinate Zn(2+): Cys299, His351, and His475.

The protein belongs to the class-II aminoacyl-tRNA synthetase family. Homodimer. Zn(2+) is required as a cofactor.

It localises to the cytoplasm. The catalysed reaction is tRNA(Thr) + L-threonine + ATP = L-threonyl-tRNA(Thr) + AMP + diphosphate + H(+). Catalyzes the attachment of threonine to tRNA(Thr) in a two-step reaction: L-threonine is first activated by ATP to form Thr-AMP and then transferred to the acceptor end of tRNA(Thr). Also edits incorrectly charged L-seryl-tRNA(Thr). This Methanococcus aeolicus (strain ATCC BAA-1280 / DSM 17508 / OCM 812 / Nankai-3) protein is Threonine--tRNA ligase.